Consider the following 370-residue polypeptide: D-alanine--D-alanine ligase (370 aa).

The region spanning 144–352 is the ATP-grasp domain; the sequence is KKIFADAGIP…YSALIERLVD (209 aa). 177–232 serves as a coordination point for ATP; sequence EEVLTYPVFVKPANLGSSVGISKATNKKELEDAMTEAFLYDRRVVVEQGVVAREIE. 3 residues coordinate Mg(2+): Asp306, Glu319, and Asn321.

This sequence belongs to the D-alanine--D-alanine ligase family. The cofactor is Mg(2+). Mn(2+) is required as a cofactor.

It is found in the cytoplasm. The enzyme catalyses 2 D-alanine + ATP = D-alanyl-D-alanine + ADP + phosphate + H(+). The protein operates within cell wall biogenesis; peptidoglycan biosynthesis. Its function is as follows. Cell wall formation. The sequence is that of D-alanine--D-alanine ligase from Listeria welshimeri serovar 6b (strain ATCC 35897 / DSM 20650 / CCUG 15529 / CIP 8149 / NCTC 11857 / SLCC 5334 / V8).